The chain runs to 135 residues: Ribonuclease VapC5 (135 aa).

The PINc domain occupies 9–130; the sequence is VLDTSVFIAT…FAALDGAASV (122 aa). The Mg(2+) site is built by Asp11 and Asp100.

Belongs to the PINc/VapC protein family. Forms a complex with VapB5. Requires Mg(2+) as cofactor.

The protein localises to the secreted. Probable toxic component of a type II toxin-antitoxin (TA) system. The cognate antitoxin is VapB5. Has limited RNase activity on substrates; activity is seen with a VapC5-VapB5 complex. In Mycobacterium tuberculosis (strain ATCC 25618 / H37Rv), this protein is Ribonuclease VapC5.